We begin with the raw amino-acid sequence, 130 residues long: Small ribosomal subunit protein uS9 (130 aa).

Belongs to the universal ribosomal protein uS9 family.

This chain is Small ribosomal subunit protein uS9, found in Streptococcus equi subsp. zooepidemicus (strain H70).